The sequence spans 149 residues: Flagellar basal-body protein FlbY (149 aa).

The basal body constitutes a major portion of the flagellar organelle and consists of five rings (E,L,P,S, and M) mounted on a central rod.

It localises to the bacterial flagellum basal body. This is Flagellar basal-body protein FlbY (flbY) from Caulobacter vibrioides (strain ATCC 19089 / CIP 103742 / CB 15) (Caulobacter crescentus).